The primary structure comprises 450 residues: Methylenetetrahydrofolate--tRNA-(uracil-5-)-methyltransferase TrmFO (450 aa).

Position 9–14 (9–14 (GGGMAG)) interacts with FAD.

Belongs to the MnmG family. TrmFO subfamily. The cofactor is FAD.

It is found in the cytoplasm. The enzyme catalyses uridine(54) in tRNA + (6R)-5,10-methylene-5,6,7,8-tetrahydrofolate + NADH + H(+) = 5-methyluridine(54) in tRNA + (6S)-5,6,7,8-tetrahydrofolate + NAD(+). It carries out the reaction uridine(54) in tRNA + (6R)-5,10-methylene-5,6,7,8-tetrahydrofolate + NADPH + H(+) = 5-methyluridine(54) in tRNA + (6S)-5,6,7,8-tetrahydrofolate + NADP(+). Its function is as follows. Catalyzes the folate-dependent formation of 5-methyl-uridine at position 54 (M-5-U54) in all tRNAs. The polypeptide is Methylenetetrahydrofolate--tRNA-(uracil-5-)-methyltransferase TrmFO (Roseobacter denitrificans (strain ATCC 33942 / OCh 114) (Erythrobacter sp. (strain OCh 114))).